Consider the following 560-residue polypeptide: Probable sulfate transporter Rv1739c (560 aa).

Positions Met1–Gly436 are required for sulfate transport in E.coli. 11 consecutive transmembrane segments (helical) span residues Val29 to Val49, Gly51 to Leu71, Ile79 to Gly99, Ala105 to Ala125, Val138 to Ile158, Trp184 to Ala204, Ala207 to Asp227, Ala256 to Ala276, Leu333 to Phe353, Ile355 to Phe375, and Ala394 to Leu414. The STAS domain maps to Asp442–Phe557.

It belongs to the SLC26A/SulP transporter (TC 2.A.53) family.

The protein localises to the cell membrane. Its function is as follows. Expression in E.coli induces sulfate uptake during early- to mid-log phase growth. Uptake is maximal at pH 6.0, is sulfate-specific, requires E.coli CysA and the transmembrane segment but not the STAS domain of the protein. The polypeptide is Probable sulfate transporter Rv1739c (Mycobacterium tuberculosis (strain ATCC 25618 / H37Rv)).